Consider the following 158-residue polypeptide: Endoribonuclease YbeY (158 aa).

3 residues coordinate Zn(2+): His-118, His-122, and His-128.

Belongs to the endoribonuclease YbeY family. Zn(2+) serves as cofactor.

It is found in the cytoplasm. Single strand-specific metallo-endoribonuclease involved in late-stage 70S ribosome quality control and in maturation of the 3' terminus of the 16S rRNA. This Haemophilus ducreyi (strain 35000HP / ATCC 700724) protein is Endoribonuclease YbeY.